A 349-amino-acid chain; its full sequence is Probable arabinogalactan endo-beta-1,4-galactanase A (349 aa).

The first 15 residues, 1–15, serve as a signal peptide directing secretion; the sequence is MLLSFLPLLPLATAA. Asn-126 is a glycosylation site (N-linked (GlcNAc...) asparagine). Glu-150 functions as the Proton donor in the catalytic mechanism. Glu-261 functions as the Nucleophile in the catalytic mechanism.

It belongs to the glycosyl hydrolase 53 family.

The protein resides in the secreted. The enzyme catalyses The enzyme specifically hydrolyzes (1-&gt;4)-beta-D-galactosidic linkages in type I arabinogalactans.. Endogalactanase involved in the degradation of plant cell wall polysaccharides, and more particularly of hairy regions of pectin. This chain is Probable arabinogalactan endo-beta-1,4-galactanase A (galA), found in Aspergillus terreus (strain NIH 2624 / FGSC A1156).